The chain runs to 693 residues: MASSSTSLKRREQPISRDGDQLIVTPLGAGSEVGRSCVYMSFRGKNILFDCGIHPAYSGMAALPYFDEIDPSSIDVLLITHFHIDHAASLPYFLEKTTFNGRVFMTHATKAIYKLLLTDYVKVSKVSVEDMLFDEQDINKSMDKIEVIDFHQTVEVNGIKFWCYTAGHVLGAAMFMVDIAGVRILYTGDYSREEDRHLRAAELPQFSPDICIIESTSGVQLHQSRHIREKRFTDVIHSTVAQGGRVLIPAFALGRAQELLLILDEYWANHPDLHNIPIYYASPLAKKCMAVYQTYILSMNDRIRNQFANSNPFVFKHISPLNSIDDFNDVGPSVVMATPGGLQSGLSRQLFDSWCSDKKNACIIPGYMVEGTLAKTIINEPKEVTLMNGLTAPLNMQVHYISFSAHADYAQTSTFLKELMPPNIILVHGEANEMMRLKQKLLTEFPDGNTKIMTPKNCESVEMYFNSEKLAKTIGRLAEKTPDVGDTVSGILVKKGFTYQIMAPDELHVFSQLSTATVTQRITIPFVGAFGVIKHRLEKIFESVEFSTDEESGLPALKVHERVTVKQESEKHISLQWSSDPISDMVSDSIVALILNISREVPKIVMEEEDAVKSEEENGKKVEKVIYALLVSLFGDVKLGENGKLVIRVDGNVAQLDKESGEVESEHSGLKERVRVAFERIQSAVKPIPLSAS.

The short motif at 81–86 (HFHIDH) is the HXHXDH motif element.

The protein belongs to the metallo-beta-lactamase superfamily. RNA-metabolizing metallo-beta-lactamase-like family. INTS11 subfamily. Component of the CPSF complex, at least composed of CPSF160, CPSF100, CPSF73-I, CPSF73-II, CPSF30, FY and FIPS5. Interacts with CLPS3, CPSF100, CPSF160 and FY. In terms of tissue distribution, highly expressed in carpels. Also detected in seedlings, roots, stems, leaves, flowers and siliques.

It localises to the nucleus. In terms of biological role, component of the cleavage and polyadenylation specificity factor (CPSF) complex that play a key role in pre-mRNA 3'-end formation, recognizing the AAUAAA signal sequence and interacting with poly(A) polymerase and other factors to bring about cleavage and poly(A) addition. May function as mRNA 3'-end-processing endonuclease and also be involved in the histone 3'-end pre-mRNA processing. This is Cleavage and polyadenylation specificity factor subunit 3-I (CPSF73-I) from Arabidopsis thaliana (Mouse-ear cress).